The primary structure comprises 193 residues: Interleukin-18 (193 aa).

Residues 1-36 constitute a propeptide that is removed on maturation; it reads MAAEQVEDNCISFVEMKFINNTLYFVAENDEDLESD.

It belongs to the IL-1 family. As to quaternary structure, forms a ternary complex with ligand-binding receptor subunit IL18R1 and signaling receptor subunit IL18RAP at the plasma membrane. Mature IL18 first binds to IL18R1 forming a low affinity binary complex, which then interacts with IL18RAP to form a high affinity ternary complex that signals inside the cell. Interacts with cargo receptor TMED10; the interaction mediates the translocation from the cytoplasm into the ERGIC (endoplasmic reticulum-Golgi intermediate compartment) and thereby secretion. Post-translationally, the pro-IL-18 precursor is processed by CASP1, CASP4 or CASP5 to yield its mature, active form. The pro-IL-18 precursor features autoinhibitory interactions between the propeptide and the post-cleavage-site region, preventing recognition by the IL18R1 receptor. Processing by CASP1, CASP4 or CASP5 induces conformational changes to generate critical receptor-binding sites. The mature form is then secreted and released in the extracellular milieu by passing through the gasdermin-D (GSDMD) pore. In contrast, cleavage by CASP3 inactivates IL18.

The protein resides in the cytoplasm. It localises to the cytosol. It is found in the secreted. Functionally, pro-inflammatory cytokine primarily involved in epithelial barrier repair, polarized T-helper 1 (Th1) cell and natural killer (NK) cell immune responses. Upon binding to IL18R1 and IL18RAP, forms a signaling ternary complex which activates NF-kappa-B, triggering synthesis of inflammatory mediators. Synergizes with IL12/interleukin-12 to induce IFNG synthesis from T-helper 1 (Th1) cells and natural killer (NK) cells. Involved in transduction of inflammation downstream of pyroptosis: its mature form is specifically released in the extracellular milieu by passing through the gasdermin-D (GSDMD) pore. This chain is Interleukin-18 (IL18), found in Boselaphus tragocamelus (Nilgai).